The sequence spans 355 residues: N5-carboxyaminoimidazole ribonucleotide synthase (355 aa).

ATP-binding positions include arginine 80, lysine 120, 125 to 131 (GYDGRGQ), 153 to 156 (EQGI), glutamate 161, histidine 184, and 237 to 238 (NE). The ATP-grasp domain occupies 84–267 (KQLFDKLHLP…QFELHLRAIT (184 aa)).

This sequence belongs to the PurK/PurT family. As to quaternary structure, homodimer.

It catalyses the reaction 5-amino-1-(5-phospho-beta-D-ribosyl)imidazole + hydrogencarbonate + ATP = 5-carboxyamino-1-(5-phospho-D-ribosyl)imidazole + ADP + phosphate + 2 H(+). Its pathway is purine metabolism; IMP biosynthesis via de novo pathway; 5-amino-1-(5-phospho-D-ribosyl)imidazole-4-carboxylate from 5-amino-1-(5-phospho-D-ribosyl)imidazole (N5-CAIR route): step 1/2. In terms of biological role, catalyzes the ATP-dependent conversion of 5-aminoimidazole ribonucleotide (AIR) and HCO(3)(-) to N5-carboxyaminoimidazole ribonucleotide (N5-CAIR). In Escherichia coli (strain K12), this protein is N5-carboxyaminoimidazole ribonucleotide synthase.